The chain runs to 250 residues: UPF0758 protein tlr1707 (250 aa).

In terms of domain architecture, MPN spans 116–239 (TIIDSPALAA…YQSLREITPL (124 aa)). Zn(2+)-binding residues include His-188, His-190, and Asp-201. The short motif at 188–201 (HNHPSGNLSPSQAD) is the JAMM motif element.

This sequence belongs to the UPF0758 family.

The chain is UPF0758 protein tlr1707 from Thermosynechococcus vestitus (strain NIES-2133 / IAM M-273 / BP-1).